A 327-amino-acid chain; its full sequence is DNA-directed RNA polymerase subunit alpha (327 aa).

The segment at 1 to 233 (MVREKVKVST…NLFIPFLHVE (233 aa)) is alpha N-terminal domain (alpha-NTD). The segment at 267–327 (LAFQYIFIDQ…KKILDILEKK (61 aa)) is alpha C-terminal domain (alpha-CTD).

Belongs to the RNA polymerase alpha chain family. In plastids the minimal PEP RNA polymerase catalytic core is composed of four subunits: alpha, beta, beta', and beta''. When a (nuclear-encoded) sigma factor is associated with the core the holoenzyme is formed, which can initiate transcription.

The protein localises to the plastid. It is found in the chloroplast. The catalysed reaction is RNA(n) + a ribonucleoside 5'-triphosphate = RNA(n+1) + diphosphate. Functionally, DNA-dependent RNA polymerase catalyzes the transcription of DNA into RNA using the four ribonucleoside triphosphates as substrates. This is DNA-directed RNA polymerase subunit alpha from Crucihimalaya wallichii (Rock-cress).